The primary structure comprises 109 residues: Spermidine export protein MdtI (109 aa).

A run of 4 helical transmembrane segments spans residues 6–26, 36–56, 64–84, and 88–108; these read WVHAAWLALAIVLEIVANVFL, IFGLLSLAAVLAAFSALSQAV, AYALWGGFGIAATLAAGWILF, and LNRKGWIGLVLLLAGMIMVKL.

It belongs to the drug/metabolite transporter (DMT) superfamily. Small multidrug resistance (SMR) (TC 2.A.7.1) family. MdtI subfamily. In terms of assembly, forms a complex with MdtJ.

It localises to the cell inner membrane. Its function is as follows. Catalyzes the excretion of spermidine. This Escherichia coli O81 (strain ED1a) protein is Spermidine export protein MdtI.